The sequence spans 500 residues: Endothelial lipase (500 aa).

A signal peptide spans 1–20 (MRNTVFLLGFWSVYCYFPAG). An intrachain disulfide couples Cys-64 to Cys-77. Asn-65, Asn-80, and Asn-136 each carry an N-linked (GlcNAc...) asparagine glycan. Ser-169 (nucleophile) is an active-site residue. Asp-193 acts as the Charge relay system in catalysis. Cys-252 and Cys-272 form a disulfide bridge. His-274 (charge relay system) is an active-site residue. Disulfide bonds link Cys-297–Cys-316 and Cys-308–Cys-311. Residue 325–337 (KMRKKRNSKMYLK) participates in heparin binding. Residues 347–482 (YHYQLKVHMF…SPGQELWFHK (136 aa)) enclose the PLAT domain. N-linked (GlcNAc...) asparagine glycans are attached at residues Asn-359 and Asn-393. Residues Cys-463 and Cys-483 are joined by a disulfide bond. A glycan (N-linked (GlcNAc...) asparagine) is linked at Asn-491.

Belongs to the AB hydrolase superfamily. Lipase family. As to quaternary structure, head to tail homodimer. In terms of tissue distribution, expressed in placenta, lung, liver, testis and spleen.

The protein resides in the secreted. It carries out the reaction a triacylglycerol + H2O = a diacylglycerol + a fatty acid + H(+). The catalysed reaction is a 1,2-diacyl-sn-glycero-3-phosphocholine + H2O = a 2-acyl-sn-glycero-3-phosphocholine + a fatty acid + H(+). The enzyme catalyses 1,2,3-tri-(9Z-octadecenoyl)-glycerol + H2O = di-(9Z)-octadecenoylglycerol + (9Z)-octadecenoate + H(+). It catalyses the reaction 1,2,3-tributanoylglycerol + H2O = dibutanoylglycerol + butanoate + H(+). It carries out the reaction 1,2-dihexadecanoyl-sn-glycero-3-phosphocholine + H2O = hexadecanoyl-sn-glycero-3-phosphocholine + hexadecanoate + H(+). Functionally, exerts both phospholipase and triglyceride lipase activities. More active as a phospholipase than a triglyceride lipase. Hydrolyzes triglycerides, both with short-chain fatty acyl groups (tributyrin) and long-chain fatty acyl groups (triolein) with similar levels of activity toward both types of substrates. Hydrolyzes high density lipoproteins (HDL) more efficiently than other lipoproteins. The chain is Endothelial lipase (Lipg) from Mus musculus (Mouse).